The chain runs to 195 residues: Probable GTP-binding protein EngB (195 aa).

One can recognise an EngB-type G domain in the interval G22–R195. Residues G30 to S37, G57 to T61, D75 to G78, T142 to D145, and F174 to S176 contribute to the GTP site. Mg(2+) is bound by residues S37 and T59.

This sequence belongs to the TRAFAC class TrmE-Era-EngA-EngB-Septin-like GTPase superfamily. EngB GTPase family. It depends on Mg(2+) as a cofactor.

Functionally, necessary for normal cell division and for the maintenance of normal septation. In Bacillus velezensis (strain DSM 23117 / BGSC 10A6 / LMG 26770 / FZB42) (Bacillus amyloliquefaciens subsp. plantarum), this protein is Probable GTP-binding protein EngB.